The sequence spans 198 residues: Recombination protein RecR (198 aa).

A C4-type zinc finger spans residues 57 to 72 (CRQCRTLSEEELCPQC). The region spanning 80–174 (SLLCVVEGPL…TLSRIAHGVP (95 aa)) is the Toprim domain.

This sequence belongs to the RecR family.

Functionally, may play a role in DNA repair. It seems to be involved in an RecBC-independent recombinational process of DNA repair. It may act with RecF and RecO. This chain is Recombination protein RecR, found in Pseudomonas paraeruginosa (strain DSM 24068 / PA7) (Pseudomonas aeruginosa (strain PA7)).